A 446-amino-acid chain; its full sequence is uncharacterized protein (446 aa).

Residues 141–282 form a disordered region; sequence TEAETNGTRP…GPKPKVKRVS (142 aa). Residues 159–170 show a composition bias toward polar residues; it reads NSGSKPKAGTQS. Over residues 194–210 the composition is skewed to basic and acidic residues; it reads IKSERRSISQGGEKDKA. Phosphoserine occurs at positions 200, 202, 212, and 214. Low complexity-rich tracts occupy residues 211-221 and 229-239; these read SSSSPSSSQQS and SPSQQNSRSSS. Ser251 bears the Phosphoserine mark. Residues 269–280 are compositionally biased toward basic residues; the sequence is GKSRGPKPKVKR. A phosphoserine mark is found at Ser282 and Ser307.

This is an uncharacterized protein from Drosophila melanogaster (Fruit fly).